We begin with the raw amino-acid sequence, 286 residues long: MTAQNIDGKAIAQAIRTKLKDKVTARKEAGQRVPGLAVILVGADPASQVYVGSKRRACEELGFISRSYDLDSSTSEDALLSLIDECNEDQSIDGILVQLPLPEHIEESKVIERIRPDKDVDGFHPYNVGRLAQRIPVLRSCTPMGIMTLIQSTGVDTYGLDAVVVGASNIVGRPMSLELLLAGCTTTTCHRFTRNLEQKVRQADLVVVAVGKPGFIPGEWIKPGAIVIDVGINRLESGQLVGDVQFEKAAENASFITPVPGGVGPMTIASLLENTLYACEQYHDHD.

NADP(+) contacts are provided by residues 166 to 168 (GAS) and Ile232.

The protein belongs to the tetrahydrofolate dehydrogenase/cyclohydrolase family. Homodimer.

It carries out the reaction (6R)-5,10-methylene-5,6,7,8-tetrahydrofolate + NADP(+) = (6R)-5,10-methenyltetrahydrofolate + NADPH. The catalysed reaction is (6R)-5,10-methenyltetrahydrofolate + H2O = (6R)-10-formyltetrahydrofolate + H(+). The protein operates within one-carbon metabolism; tetrahydrofolate interconversion. Functionally, catalyzes the oxidation of 5,10-methylenetetrahydrofolate to 5,10-methenyltetrahydrofolate and then the hydrolysis of 5,10-methenyltetrahydrofolate to 10-formyltetrahydrofolate. This Shewanella piezotolerans (strain WP3 / JCM 13877) protein is Bifunctional protein FolD.